Consider the following 448-residue polypeptide: Nicotinate phosphoribosyltransferase pncB1 (448 aa).

Residues 1 to 21 (MGPPPAARRREGEPDNQDPAG) form a disordered region. His212 carries the post-translational modification Phosphohistidine. The disordered stretch occupies residues 353–372 (RSSYKESPGGRKEALRRSRA).

The protein belongs to the NAPRTase family. Post-translationally, transiently phosphorylated on a His residue during the reaction cycle. Phosphorylation strongly increases the affinity for substrates and increases the rate of nicotinate D-ribonucleotide production. Dephosphorylation regenerates the low-affinity form of the enzyme, leading to product release.

It catalyses the reaction nicotinate + 5-phospho-alpha-D-ribose 1-diphosphate + ATP + H2O = nicotinate beta-D-ribonucleotide + ADP + phosphate + diphosphate. Its pathway is cofactor biosynthesis; NAD(+) biosynthesis; nicotinate D-ribonucleotide from nicotinate: step 1/1. Its function is as follows. Involved in the Preiss-Handler pathway, which is a recycling route that permits the salvage of free nicotinamide (NM) and nicotinic acid (Na) involved in the NAD biosynthesis. Catalyzes the synthesis of beta-nicotinate D-ribonucleotide from nicotinate and 5-phospho-D-ribose 1-phosphate at the expense of ATP. It is not able to use nicotinamide. PncB1 contributes to basal NAD level. This is Nicotinate phosphoribosyltransferase pncB1 (pncB1) from Mycobacterium tuberculosis (strain CDC 1551 / Oshkosh).